Consider the following 150-residue polypeptide: Large ribosomal subunit protein uL15 (150 aa).

The disordered stretch occupies residues 12-43 (AKKRKKRVGCGESSGHGKTSGRGHKGQKARAG). Basic residues predominate over residues 30–39 (TSGRGHKGQK).

The protein belongs to the universal ribosomal protein uL15 family. Part of the 50S ribosomal subunit.

Its function is as follows. Binds to the 23S rRNA. The chain is Large ribosomal subunit protein uL15 from Methylacidiphilum infernorum (isolate V4) (Methylokorus infernorum (strain V4)).